A 250-amino-acid chain; its full sequence is Proteasome subunit alpha (250 aa).

The protein belongs to the peptidase T1A family. The 20S proteasome core is composed of 14 alpha and 14 beta subunits that assemble into four stacked heptameric rings, resulting in a barrel-shaped structure. The two inner rings, each composed of seven catalytic beta subunits, are sandwiched by two outer rings, each composed of seven alpha subunits. The catalytic chamber with the active sites is on the inside of the barrel. Has a gated structure, the ends of the cylinder being occluded by the N-termini of the alpha-subunits. Is capped by the proteasome-associated ATPase, ARC.

It is found in the cytoplasm. The protein operates within protein degradation; proteasomal Pup-dependent pathway. Its activity is regulated as follows. The formation of the proteasomal ATPase ARC-20S proteasome complex, likely via the docking of the C-termini of ARC into the intersubunit pockets in the alpha-rings, may trigger opening of the gate for substrate entry. Interconversion between the open-gate and close-gate conformations leads to a dynamic regulation of the 20S proteasome proteolysis activity. Its function is as follows. Component of the proteasome core, a large protease complex with broad specificity involved in protein degradation. The polypeptide is Proteasome subunit alpha (Mycobacterium sp. (strain JLS)).